Consider the following 626-residue polypeptide: UPF0313 protein MM_1287 (626 aa).

The disordered stretch occupies residues 206–227 (GKGKEKAGEQDESENATEEVAK). Residues 320–589 (ALEMVKFSLT…AMQRALMHYR (270 aa)) enclose the Radical SAM core domain. [4Fe-4S] cluster is bound by residues Cys334, Cys338, and Cys341.

The protein belongs to the UPF0313 family. Requires [4Fe-4S] cluster as cofactor.

The chain is UPF0313 protein MM_1287 from Methanosarcina mazei (strain ATCC BAA-159 / DSM 3647 / Goe1 / Go1 / JCM 11833 / OCM 88) (Methanosarcina frisia).